Consider the following 404-residue polypeptide: Probable tRNA sulfurtransferase (404 aa).

A THUMP domain is found at 60-165 (HEVAESLKEI…DEAAYISYED (106 aa)). ATP-binding positions include 183-184 (ML), 208-209 (HF), Arg265, Gly287, and Gln296.

The protein belongs to the ThiI family.

It localises to the cytoplasm. The catalysed reaction is [ThiI sulfur-carrier protein]-S-sulfanyl-L-cysteine + a uridine in tRNA + 2 reduced [2Fe-2S]-[ferredoxin] + ATP + H(+) = [ThiI sulfur-carrier protein]-L-cysteine + a 4-thiouridine in tRNA + 2 oxidized [2Fe-2S]-[ferredoxin] + AMP + diphosphate. It catalyses the reaction [ThiS sulfur-carrier protein]-C-terminal Gly-Gly-AMP + S-sulfanyl-L-cysteinyl-[cysteine desulfurase] + AH2 = [ThiS sulfur-carrier protein]-C-terminal-Gly-aminoethanethioate + L-cysteinyl-[cysteine desulfurase] + A + AMP + 2 H(+). It functions in the pathway cofactor biosynthesis; thiamine diphosphate biosynthesis. In terms of biological role, catalyzes the ATP-dependent transfer of a sulfur to tRNA to produce 4-thiouridine in position 8 of tRNAs, which functions as a near-UV photosensor. Also catalyzes the transfer of sulfur to the sulfur carrier protein ThiS, forming ThiS-thiocarboxylate. This is a step in the synthesis of thiazole, in the thiamine biosynthesis pathway. The sulfur is donated as persulfide by IscS. The protein is Probable tRNA sulfurtransferase of Streptococcus agalactiae serotype V (strain ATCC BAA-611 / 2603 V/R).